The primary structure comprises 107 residues: uncharacterized protein (107 aa).

The next 3 helical transmembrane spans lie at 20–40 (FISL…EVGI), 49–69 (PAIL…ISTV), and 86–106 (VVML…KLFL).

The protein localises to the membrane. This is an uncharacterized protein from Saccharomyces cerevisiae (strain ATCC 204508 / S288c) (Baker's yeast).